The following is a 336-amino-acid chain: MKSAKKLLSVLCLGIFILTFTACDMVEKTPEAKAKSTIAKVNGEKIQRKDLDESPSMQQVLSQIKTQYGEEFEKTEQGKEVIKEQKKQILENLITEKVLLQKGKELKVIPKDEELNKEADKKVNEIKAVYNNDEKKFEETLKSTGFTKETLKEYLKDQIVIEKVINEVTKDVKVEDKDAQKYYNENQSMFTEKPNTMNVSHILVKTEDEAKKVKKRLDAKEDFAKVAKEVSQDTGSKDKGGLLGDISYSDSNFDPTFMKAAIALKSGAISNPVHTQFGYHIIKINSKKEYPVKKFDSVKEDIKKQLKQEKQQEAYTKKIEEWKKASKIKTYEKNLL.

An N-terminal signal peptide occupies residues 1–22; that stretch reads MKSAKKLLSVLCLGIFILTFTA. Cys23 carries N-palmitoyl cysteine lipidation. Residue Cys23 is the site of S-diacylglycerol cysteine attachment. One can recognise a PpiC domain in the interval 194 to 286; sequence PNTMNVSHIL…FGYHIIKINS (93 aa).

The protein belongs to the PrsA family.

It is found in the cell membrane. It carries out the reaction [protein]-peptidylproline (omega=180) = [protein]-peptidylproline (omega=0). Functionally, plays a major role in protein secretion by helping the post-translocational extracellular folding of several secreted proteins. The chain is Foldase protein PrsA from Clostridium botulinum (strain Kyoto / Type A2).